A 157-amino-acid polypeptide reads, in one-letter code: Phospholipase A2 phaiodactylipin (157 aa).

Residues tryptophan 34 and glycine 36 each contribute to the Ca(2+) site. 5 disulfide bridges follow: cysteine 35-cysteine 56, cysteine 55-cysteine 94, cysteine 62-cysteine 87, cysteine 85-cysteine 127, and cysteine 132-cysteine 143. The N-linked (GlcNAc...) asparagine glycan is linked to asparagine 43. The active site involves histidine 59. Aspartate 60 is a Ca(2+) binding site. The active site involves aspartate 88. An N-linked (GlcNAc...) asparagine glycan is attached at asparagine 101. A propeptide spans 134–139 (DEKSAR) (removed in mature form). Asparagine 153 carries an N-linked (GlcNAc...) asparagine glycan.

This sequence belongs to the phospholipase A2 family. Group III subfamily. In terms of assembly, heterodimer composed of a small subunit and a large subunit; disulfide-linked. It depends on Ca(2+) as a cofactor. In terms of tissue distribution, expressed by the venom gland.

It is found in the secreted. The enzyme catalyses a 1,2-diacyl-sn-glycero-3-phosphocholine + H2O = a 1-acyl-sn-glycero-3-phosphocholine + a fatty acid + H(+). Its function is as follows. Scorpion venom phospholipase A2 (PLA2) that is lethal to crickets and crustaceae. Causes inflammation in mice and lysis of human erythrocytes. Has a mild anticoagulant effect on human platelets. PLA2 catalyzes the calcium-dependent hydrolysis of the 2-acyl groups in 3-sn-phosphoglycerides. In Anuroctonus phaiodactylus (Mafia scorpion), this protein is Phospholipase A2 phaiodactylipin.